A 421-amino-acid polypeptide reads, in one-letter code: Medium-chain specific acyl-CoA dehydrogenase, mitochondrial (421 aa).

The transit peptide at 1-25 directs the protein to the mitochondrion; sequence MAAGFGRCCRVLRSISRFQWRSQHT. Lys69 is subject to N6-acetyllysine; alternate. Lys69 is modified (N6-succinyllysine; alternate). An FAD-binding site is contributed by 158–167; the sequence is YCVTEPGAGS. Ser167 contributes to the octanoyl-CoA binding site. Lys179 is modified (N6-succinyllysine). Position 191–193 (191–193) interacts with FAD; the sequence is WIT. 3 positions are modified to N6-acetyllysine; alternate: Lys212, Lys217, and Lys271. N6-succinyllysine; alternate is present on residues Lys212, Lys217, and Lys271. Residue Asp278 coordinates octanoyl-CoA. Position 279 is an N6-acetyllysine (Lys279). Position 281 (Arg281) interacts with octanoyl-CoA. N6-acetyllysine is present on Lys301. Residues 306 to 308 and 316 to 317 contribute to the FAD site; these read RKT and HQ. The octanoyl-CoA site is built by Arg349 and Thr351. Thr351 is modified (phosphothreonine). 374 to 378 provides a ligand contact to FAD; it reads QILGG. Residue Glu401 coordinates octanoyl-CoA. Glu401 (proton acceptor) is an active-site residue. 402-405 serves as a coordination point for FAD; sequence GTSQ.

This sequence belongs to the acyl-CoA dehydrogenase family. As to quaternary structure, homotetramer. Interacts with the heterodimeric electron transfer flavoprotein ETF. FAD is required as a cofactor. Acetylated. Could occur at proximity of the cofactor-binding sites and reduce the catalytic activity. Could be deacetylated by SIRT3.

The protein resides in the mitochondrion matrix. The catalysed reaction is a medium-chain 2,3-saturated fatty acyl-CoA + oxidized [electron-transfer flavoprotein] + H(+) = a medium-chain (2E)-enoyl-CoA + reduced [electron-transfer flavoprotein]. It carries out the reaction pentanoyl-CoA + oxidized [electron-transfer flavoprotein] + H(+) = (2E)-pentenoyl-CoA + reduced [electron-transfer flavoprotein]. The enzyme catalyses hexanoyl-CoA + oxidized [electron-transfer flavoprotein] + H(+) = (2E)-hexenoyl-CoA + reduced [electron-transfer flavoprotein]. It catalyses the reaction octanoyl-CoA + oxidized [electron-transfer flavoprotein] + H(+) = (2E)-octenoyl-CoA + reduced [electron-transfer flavoprotein]. The catalysed reaction is decanoyl-CoA + oxidized [electron-transfer flavoprotein] + H(+) = (2E)-decenoyl-CoA + reduced [electron-transfer flavoprotein]. It carries out the reaction dodecanoyl-CoA + oxidized [electron-transfer flavoprotein] + H(+) = (2E)-dodecenoyl-CoA + reduced [electron-transfer flavoprotein]. The enzyme catalyses tetradecanoyl-CoA + oxidized [electron-transfer flavoprotein] + H(+) = (2E)-tetradecenoyl-CoA + reduced [electron-transfer flavoprotein]. It catalyses the reaction oxidized [electron-transfer flavoprotein] + hexadecanoyl-CoA + H(+) = (2E)-hexadecenoyl-CoA + reduced [electron-transfer flavoprotein]. The protein operates within lipid metabolism; mitochondrial fatty acid beta-oxidation. Medium-chain specific acyl-CoA dehydrogenase is one of the acyl-CoA dehydrogenases that catalyze the first step of mitochondrial fatty acid beta-oxidation, an aerobic process breaking down fatty acids into acetyl-CoA and allowing the production of energy from fats. The first step of fatty acid beta-oxidation consists in the removal of one hydrogen from C-2 and C-3 of the straight-chain fatty acyl-CoA thioester, resulting in the formation of trans-2-enoyl-CoA. Electron transfer flavoprotein (ETF) is the electron acceptor that transfers electrons to the main mitochondrial respiratory chain via ETF-ubiquinone oxidoreductase (ETF dehydrogenase). Among the different mitochondrial acyl-CoA dehydrogenases, medium-chain specific acyl-CoA dehydrogenase acts specifically on acyl-CoAs with saturated 6 to 12 carbons long primary chains. The sequence is that of Medium-chain specific acyl-CoA dehydrogenase, mitochondrial from Pan troglodytes (Chimpanzee).